The sequence spans 171 residues: Nudix hydrolase DR_0079 (171 aa).

Residues 32-162 form the Nudix hydrolase domain; that stretch reads ERVRVVNAFL…EAAKGDLAEL (131 aa). The Nudix box motif lies at 69-91; that stretch reads GGAVQSGETYEEAFRREAREELN. Residues Glu-85 and Glu-89 each contribute to the Mg(2+) site.

Belongs to the Nudix hydrolase family. As to quaternary structure, monomer. Requires Mg(2+) as cofactor.

Its activity is regulated as follows. Inhibited by zinc, calcium or copper ions. In terms of biological role, hydrolase that converts various nucleotide triphosphates (NTPs) to the corresponding nucleotide monophosphates and diphosphate, and nucleotide diphosphates to nucleotide monophosphates and inorganic phosphate. Has a marked preference for cytosine ribonucleoside 5'-diphosphate (CDP) and cytosine ribonucleoside 5'-triphosphate (CTP). Has lower activity towards the deoxyribose nucleotides dCDP and dCTP, and towards dGDP, TDP and UDP. This chain is Nudix hydrolase DR_0079, found in Deinococcus radiodurans (strain ATCC 13939 / DSM 20539 / JCM 16871 / CCUG 27074 / LMG 4051 / NBRC 15346 / NCIMB 9279 / VKM B-1422 / R1).